The following is a 446-amino-acid chain: 3-phosphoshikimate 1-carboxyvinyltransferase (446 aa).

Positions 21, 22, and 26 each coordinate 3-phosphoshikimate. Phosphoenolpyruvate is bound at residue K21. The phosphoenolpyruvate site is built by G94 and R122. 3-phosphoshikimate-binding residues include S167, Q169, D315, and K342. Residue Q169 participates in phosphoenolpyruvate binding. D315 acts as the Proton acceptor in catalysis. The phosphoenolpyruvate site is built by R346 and R388.

This sequence belongs to the EPSP synthase family. Monomer.

Its subcellular location is the cytoplasm. It catalyses the reaction 3-phosphoshikimate + phosphoenolpyruvate = 5-O-(1-carboxyvinyl)-3-phosphoshikimate + phosphate. It functions in the pathway metabolic intermediate biosynthesis; chorismate biosynthesis; chorismate from D-erythrose 4-phosphate and phosphoenolpyruvate: step 6/7. Catalyzes the transfer of the enolpyruvyl moiety of phosphoenolpyruvate (PEP) to the 5-hydroxyl of shikimate-3-phosphate (S3P) to produce enolpyruvyl shikimate-3-phosphate and inorganic phosphate. The protein is 3-phosphoshikimate 1-carboxyvinyltransferase of Alkalilimnicola ehrlichii (strain ATCC BAA-1101 / DSM 17681 / MLHE-1).